The primary structure comprises 501 residues: Glycerol kinase (501 aa).

An ADP-binding site is contributed by T17. Residues T17, T18, and S19 each coordinate ATP. Residue T17 coordinates sn-glycerol 3-phosphate. R21 provides a ligand contact to ADP. Residues R87, E88, Y139, and D243 each contribute to the sn-glycerol 3-phosphate site. Residues R87, E88, Y139, D243, and Q244 each coordinate glycerol. The ADP site is built by T265 and G308. ATP is bound by residues T265, G308, Q312, and G409. ADP contacts are provided by G409 and N413.

The protein belongs to the FGGY kinase family.

The catalysed reaction is glycerol + ATP = sn-glycerol 3-phosphate + ADP + H(+). Its pathway is polyol metabolism; glycerol degradation via glycerol kinase pathway; sn-glycerol 3-phosphate from glycerol: step 1/1. Inhibited by fructose 1,6-bisphosphate (FBP). Key enzyme in the regulation of glycerol uptake and metabolism. Catalyzes the phosphorylation of glycerol to yield sn-glycerol 3-phosphate. The protein is Glycerol kinase of Pseudomonas savastanoi pv. phaseolicola (strain 1448A / Race 6) (Pseudomonas syringae pv. phaseolicola (strain 1448A / Race 6)).